The chain runs to 132 residues: NADPH-dependent 7-cyano-7-deazaguanine reductase (132 aa).

The active-site Thioimide intermediate is the cysteine 34. The active-site Proton donor is the aspartate 41. Substrate-binding positions include isoleucine 56 to leucine 58 and histidine 75 to glutamate 76.

It belongs to the GTP cyclohydrolase I family. QueF type 1 subfamily.

It is found in the cytoplasm. The catalysed reaction is 7-aminomethyl-7-carbaguanine + 2 NADP(+) = 7-cyano-7-deazaguanine + 2 NADPH + 3 H(+). It participates in tRNA modification; tRNA-queuosine biosynthesis. Functionally, catalyzes the NADPH-dependent reduction of 7-cyano-7-deazaguanine (preQ0) to 7-aminomethyl-7-deazaguanine (preQ1). This Vesicomyosocius okutanii subsp. Calyptogena okutanii (strain HA) protein is NADPH-dependent 7-cyano-7-deazaguanine reductase.